The following is a 333-amino-acid chain: PDZ domain-containing protein GIPC1 (333 aa).

Residues 1–11 show a composition bias toward basic residues; sequence MPLGLGRRKKA. The interval 1 to 54 is disordered; that stretch reads MPLGLGRRKKAPPLVENEEAEPGRGGLGVGEPGPLGGGGSGGPQMGLPPPPPAL. The span at 23–44 shows a compositional bias: gly residues; it reads GRGGLGVGEPGPLGGGGSGGPQ. Phosphoserine is present on Ser-68. Residues 133–213 enclose the PDZ domain; it reads EVEVFKSEDA…GRTFTLKLTE (81 aa). A phosphoserine mark is found at Ser-222, Ser-225, and Ser-232. Residues 223-244 form a disordered region; the sequence is QRSAGGRPGSGPQLGTGRGTLR. Gly residues predominate over residues 228–240; that stretch reads GRPGSGPQLGTGR. Thr-242 carries the post-translational modification Phosphothreonine. Ser-247 carries the phosphoserine modification.

Belongs to the GIPC family. Interacts with GLUT1 (C-terminus), ACTN1, KIF1B, MYO6, PLEKHG5, SDC4/syndecan-4 and SEMA4C/semaphorin-4C. Interacts with RGS19 C-terminus. Interacts with HTLV-I Tax through the PDZ domain. Widely expressed. Expressed in skeletal muscle (at protein level).

It is found in the cytoplasm. Its subcellular location is the membrane. In terms of biological role, may be involved in G protein-linked signaling. This is PDZ domain-containing protein GIPC1 (GIPC1) from Homo sapiens (Human).